The following is an 87-amino-acid chain: Small ribosomal subunit protein uS15 (87 aa).

Belongs to the universal ribosomal protein uS15 family. Part of the 30S ribosomal subunit. Forms a bridge to the 50S subunit in the 70S ribosome, contacting the 23S rRNA.

In terms of biological role, one of the primary rRNA binding proteins, it binds directly to 16S rRNA where it helps nucleate assembly of the platform of the 30S subunit by binding and bridging several RNA helices of the 16S rRNA. Its function is as follows. Forms an intersubunit bridge (bridge B4) with the 23S rRNA of the 50S subunit in the ribosome. In Pseudothermotoga lettingae (strain ATCC BAA-301 / DSM 14385 / NBRC 107922 / TMO) (Thermotoga lettingae), this protein is Small ribosomal subunit protein uS15.